Reading from the N-terminus, the 84-residue chain is Small ribosomal subunit protein bS16 (84 aa).

The protein belongs to the bacterial ribosomal protein bS16 family.

This is Small ribosomal subunit protein bS16 from Endomicrobium trichonymphae.